We begin with the raw amino-acid sequence, 71 residues long: Exodeoxyribonuclease 7 small subunit (71 aa).

The protein belongs to the XseB family. As to quaternary structure, heterooligomer composed of large and small subunits.

The protein resides in the cytoplasm. It catalyses the reaction Exonucleolytic cleavage in either 5'- to 3'- or 3'- to 5'-direction to yield nucleoside 5'-phosphates.. Functionally, bidirectionally degrades single-stranded DNA into large acid-insoluble oligonucleotides, which are then degraded further into small acid-soluble oligonucleotides. The chain is Exodeoxyribonuclease 7 small subunit from Clostridium botulinum (strain ATCC 19397 / Type A).